The following is a 97-amino-acid chain: Conotoxin Cal6.1b (97 aa).

Residues 1-22 form the signal peptide; sequence MKLTTVLVVALLVLAACQFTVT. Positions 22 to 46 are disordered; it reads TDNSGDDPENPSLRSAGENQNPDST. Residues 23-68 constitute a propeptide that is removed on maturation; the sequence is DNSGDDPENPSLRSAGENQNPDSTKTITAWATRDMTNMRRGLNRPS. 3 disulfides stabilise this stretch: C71-C87, C78-C91, and C86-C96.

The protein belongs to the conotoxin O1 superfamily. As to expression, expressed by the venom duct.

The protein localises to the secreted. Probable neurotoxin with unknown target. Possibly targets ion channels. The protein is Conotoxin Cal6.1b of Californiconus californicus (California cone).